The chain runs to 475 residues: MSAVLKPQADLAIADISLADWGRKEIKIAETEMPGLMAIREEFAAAQPLKGARITGSLHMTIQTAVLIETLKALGADVRWASCNIFSTQDHAAAAIAAGGTPVFAIKGESLEDYWDYTHRIFDFGAKGTPGEGPNMILDDGGDATLLMHLGQRAEKDLSVVANPTSEEERILFAAIKAKIAQDPTWYTRKSAEIIGVTEETTTGVHRLNEMSAKGTLLFRAINVNDSVTKSKFDNLYGCRESLVDGIKRATDVMIAGKVALVAGYGDVGKGCAQALAALRAQVWVTEIDPINALQAAMEGYKVVTMEYAADKADIFVTTTGNKDVIRHEHMVAMKNEAIVCNIGHFDNEIDVASIEKYRWEEVKPQVDHVIFPDGKRITLLAKGRLVNLGCATGHPSFVMSSSFANQTIAQIELFTKPDAYQAGKVYVLPKVLDEKVARLHLKKVGAQLTELTDAQAAYIGVKKEGPYKADTYRY.

Substrate-binding residues include T61, D140, and E200. 201 to 203 is a binding site for NAD(+); sequence TTT. The substrate site is built by K230 and D234. NAD(+)-binding positions include N235, 264 to 269, E287, N322, 343 to 345, and N388; these read GYGDVG and IGH.

Belongs to the adenosylhomocysteinase family. NAD(+) is required as a cofactor.

The protein resides in the cytoplasm. It catalyses the reaction S-adenosyl-L-homocysteine + H2O = L-homocysteine + adenosine. It functions in the pathway amino-acid biosynthesis; L-homocysteine biosynthesis; L-homocysteine from S-adenosyl-L-homocysteine: step 1/1. Its function is as follows. May play a key role in the regulation of the intracellular concentration of adenosylhomocysteine. The polypeptide is Adenosylhomocysteinase (Paracidovorax citrulli (strain AAC00-1) (Acidovorax citrulli)).